The chain runs to 355 residues: Tetraacyldisaccharide 4'-kinase (355 aa).

Residue 49–56 (TAGGTGKT) participates in ATP binding.

It belongs to the LpxK family.

The catalysed reaction is a lipid A disaccharide + ATP = a lipid IVA + ADP + H(+). The protein operates within glycolipid biosynthesis; lipid IV(A) biosynthesis; lipid IV(A) from (3R)-3-hydroxytetradecanoyl-[acyl-carrier-protein] and UDP-N-acetyl-alpha-D-glucosamine: step 6/6. In terms of biological role, transfers the gamma-phosphate of ATP to the 4'-position of a tetraacyldisaccharide 1-phosphate intermediate (termed DS-1-P) to form tetraacyldisaccharide 1,4'-bis-phosphate (lipid IVA). In Chlorobium luteolum (strain DSM 273 / BCRC 81028 / 2530) (Pelodictyon luteolum), this protein is Tetraacyldisaccharide 4'-kinase.